The chain runs to 100 residues: ATP-dependent Clp protease adapter protein ClpS (100 aa).

Belongs to the ClpS family. As to quaternary structure, binds to the N-terminal domain of the chaperone ClpA.

Its function is as follows. Involved in the modulation of the specificity of the ClpAP-mediated ATP-dependent protein degradation. The sequence is that of ATP-dependent Clp protease adapter protein ClpS from Nitratidesulfovibrio vulgaris (strain DSM 19637 / Miyazaki F) (Desulfovibrio vulgaris).